The primary structure comprises 227 residues: Cytochrome c oxidase subunit 2 (227 aa).

Residues 1–14 are Mitochondrial intermembrane-facing; the sequence is MAYPFELGFQDATS. The helical transmembrane segment at 15 to 45 threads the bilayer; that stretch reads PIMEELLHFHDHTLMIVFLISSLVLYIISLM. Over 46 to 59 the chain is Mitochondrial matrix; the sequence is LTTKLTHTSTMDAQ. The helical transmembrane segment at 60–87 threads the bilayer; that stretch reads EIETIWTILPAIILILIALPSLRILYMM. Residues 88–227 lie on the Mitochondrial intermembrane side of the membrane; it reads DEINDPSLTV…HFENWSSSML (140 aa). Cu cation contacts are provided by H161, C196, E198, C200, H204, and M207. E198 provides a ligand contact to Mg(2+).

This sequence belongs to the cytochrome c oxidase subunit 2 family. Component of the cytochrome c oxidase (complex IV, CIV), a multisubunit enzyme composed of 14 subunits. The complex is composed of a catalytic core of 3 subunits MT-CO1, MT-CO2 and MT-CO3, encoded in the mitochondrial DNA, and 11 supernumerary subunits COX4I, COX5A, COX5B, COX6A, COX6B, COX6C, COX7A, COX7B, COX7C, COX8 and NDUFA4, which are encoded in the nuclear genome. The complex exists as a monomer or a dimer and forms supercomplexes (SCs) in the inner mitochondrial membrane with NADH-ubiquinone oxidoreductase (complex I, CI) and ubiquinol-cytochrome c oxidoreductase (cytochrome b-c1 complex, complex III, CIII), resulting in different assemblies (supercomplex SCI(1)III(2)IV(1) and megacomplex MCI(2)III(2)IV(2)). Found in a complex with TMEM177, COA6, COX18, COX20, SCO1 and SCO2. Interacts with TMEM177 in a COX20-dependent manner. Interacts with COX20. Interacts with COX16. Cu cation serves as cofactor.

It is found in the mitochondrion inner membrane. It catalyses the reaction 4 Fe(II)-[cytochrome c] + O2 + 8 H(+)(in) = 4 Fe(III)-[cytochrome c] + 2 H2O + 4 H(+)(out). In terms of biological role, component of the cytochrome c oxidase, the last enzyme in the mitochondrial electron transport chain which drives oxidative phosphorylation. The respiratory chain contains 3 multisubunit complexes succinate dehydrogenase (complex II, CII), ubiquinol-cytochrome c oxidoreductase (cytochrome b-c1 complex, complex III, CIII) and cytochrome c oxidase (complex IV, CIV), that cooperate to transfer electrons derived from NADH and succinate to molecular oxygen, creating an electrochemical gradient over the inner membrane that drives transmembrane transport and the ATP synthase. Cytochrome c oxidase is the component of the respiratory chain that catalyzes the reduction of oxygen to water. Electrons originating from reduced cytochrome c in the intermembrane space (IMS) are transferred via the dinuclear copper A center (CU(A)) of subunit 2 and heme A of subunit 1 to the active site in subunit 1, a binuclear center (BNC) formed by heme A3 and copper B (CU(B)). The BNC reduces molecular oxygen to 2 water molecules using 4 electrons from cytochrome c in the IMS and 4 protons from the mitochondrial matrix. The chain is Cytochrome c oxidase subunit 2 (MT-CO2) from Tamias townsendii (Townsend's chipmunk).